Reading from the N-terminus, the 438-residue chain is MTARAIIIGAPRSGSGKTSVTIGLLRAFARRGVKVRGIKTGPDYIDPGFHAFATGTPGLNLDSWAMQPDLLRHLFSQQTEDAELILIESAMGLFDGIPVAENRTGSAADLARLFRIPVLLVLDVSGQSQTAATIAHGFAHYDPDVTMGAVVLNRAGSERHRTLCTEAIEKIGLPVVGCVLRDPSLILPERHLGLVQASEHPEIDPHIDRLADAMEKSIDLDTLFSLAAPVDMPCGSVAAAIAPPGQRIALAEDAAFTFLYPHLRRHWRAAGAEIVPFSPLADEAPDESCDICWLPGGYPELFAGKLADAVGFKAGITRFAETKPVHGECGGYMVLGERLEDAEGVIHAMTGLLSHATSFATRKMNLGYRQATIAADSPLGMAGDVLRGHEFHYARVIDPGRDQPFAHMADGQGRPLGPSGGRRGFVSGTFFHAIAKGG.

The GATase cobBQ-type domain occupies 247-438 (RIALAEDAAF…TFFHAIAKGG (192 aa)). Cysteine 329 functions as the Nucleophile in the catalytic mechanism.

It belongs to the CobB/CbiA family. It depends on Mg(2+) as a cofactor.

The enzyme catalyses hydrogenobyrinate + 2 L-glutamine + 2 ATP + 2 H2O = hydrogenobyrinate a,c-diamide + 2 L-glutamate + 2 ADP + 2 phosphate + 2 H(+). The protein operates within cofactor biosynthesis; adenosylcobalamin biosynthesis; cob(II)yrinate a,c-diamide from precorrin-2 (aerobic route): step 9/10. Catalyzes the ATP-dependent amidation of the two carboxylate groups at positions a and c of hydrogenobyrinate, using either L-glutamine or ammonia as the nitrogen source. The chain is Hydrogenobyrinate a,c-diamide synthase from Agrobacterium fabrum (strain C58 / ATCC 33970) (Agrobacterium tumefaciens (strain C58)).